Consider the following 258-residue polypeptide: Acyl-[acyl-carrier-protein]--UDP-N-acetylglucosamine O-acyltransferase (258 aa).

This sequence belongs to the transferase hexapeptide repeat family. LpxA subfamily. As to quaternary structure, homotrimer.

The protein localises to the cytoplasm. It catalyses the reaction a (3R)-hydroxyacyl-[ACP] + UDP-N-acetyl-alpha-D-glucosamine = a UDP-3-O-[(3R)-3-hydroxyacyl]-N-acetyl-alpha-D-glucosamine + holo-[ACP]. The protein operates within glycolipid biosynthesis; lipid IV(A) biosynthesis; lipid IV(A) from (3R)-3-hydroxytetradecanoyl-[acyl-carrier-protein] and UDP-N-acetyl-alpha-D-glucosamine: step 1/6. Its function is as follows. Involved in the biosynthesis of lipid A, a phosphorylated glycolipid that anchors the lipopolysaccharide to the outer membrane of the cell. The chain is Acyl-[acyl-carrier-protein]--UDP-N-acetylglucosamine O-acyltransferase from Halorhodospira halophila (strain DSM 244 / SL1) (Ectothiorhodospira halophila (strain DSM 244 / SL1)).